The following is a 498-amino-acid chain: MNFTVSFSTLMPLAPVMIVALTAVVVMLLISIKRNHNLIATTSVVGLNLAALYILLELFGGKFVPANVMGMFMVDPFTMFYQFMILVASLACCTLSHAYIETYKDNREELYLLLLASVAGAMLMVASSHYASFFISLELMSIPVYGLLAYTYQRSQSLEAGIKYLVLSATASAMLLMGMAYIYAYTGSLSFYDSVQALFGAIKQPMVLLGLALIIFAVAFKLSLAPFHKWTPDVYAGAPAPMATFLATAAKVATIGLFVRYLLASGAIMVNSLVTVLTIIAVLSILVGNLLAVRQVNLKRILGYSSIAHFGYLLIALISMTYASLGSVTVYVVTYVLTTIGAFGAVALMSSPYNNVDEAQSLADYRGLFWRRPVLTATLTVMMLSLAGIPLTAGFIGKFLVVMAAVTTQHWFLAAMIIVGSGIGLYYYLRVMVVMYMTPPETPRIDADAHWGQKVGGLMVLAAAALVIILGVYPDPMINLALKAEILSPLHFMLSQQQ.

The next 14 helical transmembrane spans lie at 10–30 (LMPL…MLLI), 44–64 (VVGL…GKFV), 68–88 (VMGM…ILVA), 109–129 (ELYL…ASSH), 130–150 (YASF…LLAY), 164–184 (YLVL…YIYA), 207–227 (VLLG…LAPF), 239–259 (PAPM…GLFV), 273–293 (LVTV…LLAV), 301–321 (ILGY…ISMT), 328–348 (VTVY…AVAL), 377–397 (ATLT…GFIG), 412–434 (FLAA…VMVV), and 458–478 (LMVL…DPMI).

This sequence belongs to the complex I subunit 2 family. In terms of assembly, NDH-1 is composed of 14 different subunits. Subunits NuoA, H, J, K, L, M, N constitute the membrane sector of the complex.

Its subcellular location is the cell inner membrane. It carries out the reaction a quinone + NADH + 5 H(+)(in) = a quinol + NAD(+) + 4 H(+)(out). In terms of biological role, NDH-1 shuttles electrons from NADH, via FMN and iron-sulfur (Fe-S) centers, to quinones in the respiratory chain. The immediate electron acceptor for the enzyme in this species is believed to be ubiquinone. Couples the redox reaction to proton translocation (for every two electrons transferred, four hydrogen ions are translocated across the cytoplasmic membrane), and thus conserves the redox energy in a proton gradient. The chain is NADH-quinone oxidoreductase subunit N from Acinetobacter baumannii (strain AB0057).